We begin with the raw amino-acid sequence, 192 residues long: Protein GrpE (192 aa).

The disordered stretch occupies residues 1 to 34 (MSSKEQKTPNEQVSEEMENTAEQQVEATQETGEC). Over residues 20 to 31 (TAEQQVEATQET) the composition is skewed to polar residues.

Belongs to the GrpE family. Homodimer.

It localises to the cytoplasm. Its function is as follows. Participates actively in the response to hyperosmotic and heat shock by preventing the aggregation of stress-denatured proteins, in association with DnaK and GrpE. It is the nucleotide exchange factor for DnaK and may function as a thermosensor. Unfolded proteins bind initially to DnaJ; upon interaction with the DnaJ-bound protein, DnaK hydrolyzes its bound ATP, resulting in the formation of a stable complex. GrpE releases ADP from DnaK; ATP binding to DnaK triggers the release of the substrate protein, thus completing the reaction cycle. Several rounds of ATP-dependent interactions between DnaJ, DnaK and GrpE are required for fully efficient folding. In Yersinia pestis, this protein is Protein GrpE.